We begin with the raw amino-acid sequence, 1210 residues long: ATP-dependent helicase/nuclease subunit A (1210 aa).

The region spanning Gln27–Gln483 is the UvrD-like helicase ATP-binding domain. Ala48–Thr55 is a binding site for ATP. The 287-residue stretch at Gln512–Gly798 folds into the UvrD-like helicase C-terminal domain.

It belongs to the helicase family. AddA subfamily. Heterodimer of AddA and AddB/RexB. Mg(2+) serves as cofactor.

It carries out the reaction Couples ATP hydrolysis with the unwinding of duplex DNA by translocating in the 3'-5' direction.. The catalysed reaction is ATP + H2O = ADP + phosphate + H(+). Functionally, the heterodimer acts as both an ATP-dependent DNA helicase and an ATP-dependent, dual-direction single-stranded exonuclease. Recognizes the chi site generating a DNA molecule suitable for the initiation of homologous recombination. The AddA nuclease domain is required for chi fragment generation; this subunit has the helicase and 3' -&gt; 5' nuclease activities. The protein is ATP-dependent helicase/nuclease subunit A of Streptococcus pyogenes serotype M5 (strain Manfredo).